Consider the following 526-residue polypeptide: Clostripain (526 aa).

Residues 1–27 (MLRRKVSTLLMTALITTSFLNSKPVYA) form the signal peptide. Residues 28 to 50 (NPVTKSKDNNLKEVQQVTSKSNK) constitute a propeptide that is removed on maturation. The propeptide at 182-190 (EKSNPRLNR) is linker. The active-site Nucleophile is Cys231.

This sequence belongs to the peptidase C11 family. As to quaternary structure, heterodimer of a light chain and a heavy chain held together by strong non-covalent forces rather than by intramolecular disulfide bridges.

The enzyme catalyses Preferential cleavage: Arg-|-Xaa, including Arg-|-Pro bond, but not Lys-|-Xaa.. Functionally, cysteine endopeptidase with strict specificity. This Hathewaya histolytica (Clostridium histolyticum) protein is Clostripain (cloSI).